Consider the following 514-residue polypeptide: Zinc finger and BTB domain-containing protein 2 (514 aa).

A BTB domain is found at 24–89 (CDCTVAIGDV…MYTGKMAPQL (66 aa)). Glycyl lysine isopeptide (Lys-Gly) (interchain with G-Cter in SUMO2) cross-links involve residues lysine 147 and lysine 154. Residues 149–231 (ASAPEKLGRD…LEASSSDEQP (83 aa)) form a disordered region. Composition is skewed to polar residues over residues 161-200 (PQTS…PLQT) and 222-231 (LEASSSDEQP). The segment at 254–276 (YACHLCGRRFTLRSSLREHLQIH) adopts a C2H2-type 1 zinc-finger fold. A Phosphoserine modification is found at serine 341. Residue lysine 362 forms a Glycyl lysine isopeptide (Lys-Gly) (interchain with G-Cter in SUMO2) linkage. A C2H2-type 2 zinc finger spans residues 363-385 (YECTICGRKFIQKSHWREHMYIH). The C2H2-type 3; atypical zinc-finger motif lies at 390–410 (FKCSTCDKSFCRANQAARHVC). Residues 448 to 468 (YKCNLCDKTFSTPNEVVKHSC) form a C2H2-type 4; atypical zinc finger. Residues lysine 465, lysine 505, and lysine 506 each participate in a glycyl lysine isopeptide (Lys-Gly) (interchain with G-Cter in SUMO2) cross-link.

It localises to the nucleus. May be involved in transcriptional regulation. This chain is Zinc finger and BTB domain-containing protein 2 (ZBTB2), found in Homo sapiens (Human).